We begin with the raw amino-acid sequence, 128 residues long: Large ribosomal subunit protein bL12 (128 aa).

This sequence belongs to the bacterial ribosomal protein bL12 family. As to quaternary structure, homodimer. Part of the ribosomal stalk of the 50S ribosomal subunit. Forms a multimeric L10(L12)X complex, where L10 forms an elongated spine to which 2 to 4 L12 dimers bind in a sequential fashion. Binds GTP-bound translation factors.

Functionally, forms part of the ribosomal stalk which helps the ribosome interact with GTP-bound translation factors. Is thus essential for accurate translation. The protein is Large ribosomal subunit protein bL12 of Synechococcus sp. (strain ATCC 27144 / PCC 6301 / SAUG 1402/1) (Anacystis nidulans).